A 100-amino-acid polypeptide reads, in one-letter code: Urease subunit gamma (100 aa).

It belongs to the urease gamma subunit family. Heterotrimer of UreA (gamma), UreB (beta) and UreC (alpha) subunits. Three heterotrimers associate to form the active enzyme.

It localises to the cytoplasm. The enzyme catalyses urea + 2 H2O + H(+) = hydrogencarbonate + 2 NH4(+). It functions in the pathway nitrogen metabolism; urea degradation; CO(2) and NH(3) from urea (urease route): step 1/1. This Actinobacillus pleuropneumoniae serotype 5b (strain L20) protein is Urease subunit gamma.